Consider the following 391-residue polypeptide: Chorismate synthase (391 aa).

Position 48 (arginine 48) interacts with NADP(+). Residues 126–128, glycine 286, 301–305, and arginine 328 contribute to the FMN site; these read RAS and KPTSS.

The protein belongs to the chorismate synthase family. It depends on FMNH2 as a cofactor.

It catalyses the reaction 5-O-(1-carboxyvinyl)-3-phosphoshikimate = chorismate + phosphate. Its pathway is metabolic intermediate biosynthesis; chorismate biosynthesis; chorismate from D-erythrose 4-phosphate and phosphoenolpyruvate: step 7/7. Catalyzes the anti-1,4-elimination of the C-3 phosphate and the C-6 proR hydrogen from 5-enolpyruvylshikimate-3-phosphate (EPSP) to yield chorismate, which is the branch point compound that serves as the starting substrate for the three terminal pathways of aromatic amino acid biosynthesis. This reaction introduces a second double bond into the aromatic ring system. This chain is Chorismate synthase, found in Saccharolobus islandicus (strain M.16.27) (Sulfolobus islandicus).